The sequence spans 1274 residues: Virulence protein SSD1 (1274 aa).

The segment covering 1–13 has biased composition (low complexity); that stretch reads MSSSQDYNNNSNN. 4 disordered regions span residues 1–38, 61–124, 138–337, and 413–488; these read MSSS…SELT, LEEK…GHSR, ANQK…TLFA, and KEKE…DDVE. The span at 19–32 shows a compositional bias: basic residues; sequence SSRKGKNLHVAHRR. The segment covering 72–81 has biased composition (polar residues); the sequence is FTYPSAQGSS. Residues 95–106 are compositionally biased toward low complexity; sequence NRSSHSRSSSIN. Polar residues predominate over residues 139 to 152; it reads NQKQSNRNSLSPTI. Low complexity predominate over residues 177-187; it reads GDTSGQSSSSH. Residues 248 to 263 show a composition bias toward polar residues; it reads SGSNTNTDGINSNWRA. Low complexity predominate over residues 264-282; the sequence is QQQSPQQQQRQGGLLEPPQ. Positions 320 to 330 are enriched in gly residues; it reads QQGGHQGGGNN. Over residues 413–437 the composition is skewed to basic and acidic residues; it reads KEKEEKKRRKDNTLHSRPLTDDIHN. Polar residues predominate over residues 438–453; that stretch reads DATSAPNTAEGSVTGT. The CSD2 domain maps to 562–637; it reads VWFKPTDKKV…EIDSILRDNN (76 aa). Positions 688 to 1001 constitute an RNB domain; the sequence is FVDHALHVKR…VHRQLKAVLN (314 aa). In terms of domain architecture, DIS3L2 C-terminal spans 1050-1136; it reads GQLLCMGTVV…KNKYRTSALQ (87 aa). Residues 1174–1217 are disordered; sequence SLKSNELHEVEKDETKSMPSSPTQSEIPKNVRTNSSSRISSSGN. A compositionally biased stretch (basic and acidic residues) spans 1178-1189; the sequence is NELHEVEKDETK. Polar residues predominate over residues 1190–1207; it reads SMPSSPTQSEIPKNVRTN.

The protein belongs to the RNR ribonuclease family.

In terms of biological role, plays a role in resistance to host antimicrobial peptides such as protamine, RP-1, or human beta-defensin-2; allowing colonization of human tissues. Required for resistance to membrane permeabilization and maintenance of mitochondrial membrane potential upon exposure to RP-1. This Candida albicans (strain SC5314 / ATCC MYA-2876) (Yeast) protein is Virulence protein SSD1 (SSD1).